The primary structure comprises 91 residues: Small ribosomal subunit protein bS6 (91 aa).

It belongs to the bacterial ribosomal protein bS6 family.

Its function is as follows. Binds together with bS18 to 16S ribosomal RNA. The protein is Small ribosomal subunit protein bS6 of Leptospira borgpetersenii serovar Hardjo-bovis (strain JB197).